A 92-amino-acid chain; its full sequence is Small ribosomal subunit protein uS19 (92 aa).

It belongs to the universal ribosomal protein uS19 family.

Its function is as follows. Protein S19 forms a complex with S13 that binds strongly to the 16S ribosomal RNA. The protein is Small ribosomal subunit protein uS19 of Caulobacter sp. (strain K31).